The following is a 336-amino-acid chain: HTH-type transcriptional regulator CdhR (336 aa).

In terms of domain architecture, HTH araC/xylS-type spans 213–311 (VQVIGEMERH…AASPSQDRAV (99 aa)). 2 consecutive DNA-binding regions (H-T-H motif) follow at residues 230–251 (LELA…RVHL) and 278–301 (VLQV…RARF). The interval 305-336 (PSQDRAVLPLKAPAATPPGAPAGHRTPRAERG) is disordered.

Functionally, induces the transcription of the PA5384-PA5388 operon in response to carnitine. This operon is involved in the degradation of L-carnitine, and allows P.aeruginosa to grow on L-carnitine as the sole source of carbon and nitrogen. This Pseudomonas aeruginosa (strain ATCC 15692 / DSM 22644 / CIP 104116 / JCM 14847 / LMG 12228 / 1C / PRS 101 / PAO1) protein is HTH-type transcriptional regulator CdhR (cdhR).